A 271-amino-acid chain; its full sequence is Aquaporin-2 (271 aa).

Over 1-11 the chain is Cytoplasmic; sequence MWELRSIAFSR. A helical transmembrane segment spans residues 12–32; that stretch reads AVFAEFLATLLFVFFGLGSAL. Residues 33–40 are Extracellular-facing; it reads NWPQALPS. Residues 41-59 form a helical membrane-spanning segment; that stretch reads VLQIAMAFGLGIGTLVQAL. Residues 60-64 are Cytoplasmic-facing; sequence GHISG. The segment at residues 65-74 is an intramembrane region (discontinuously helical); that stretch reads AHINPAVTVA. The NPA 1 motif lies at 68 to 70; it reads NPA. Residues 75–85 lie on the Cytoplasmic side of the membrane; sequence CLVGCHVSVLR. The chain crosses the membrane as a helical span at residues 86-107; the sequence is AAFYVAAQLLGAVAGAALLHEI. Over 108–127 the chain is Extracellular; that stretch reads TPADIRGDLAVNALSNSTTA. Asn-123 carries an N-linked (GlcNAc...) asparagine glycan. A helical transmembrane segment spans residues 128–148; the sequence is GQAVTVELFLTLQLVLCIFAS. At 149–156 the chain is on the cytoplasmic side; that stretch reads TDERRGEN. A helical membrane pass occupies residues 157–176; that stretch reads PGTPALSIGFSVALGHLLGI. The Extracellular portion of the chain corresponds to 177–180; the sequence is HYTG. Positions 181-193 form an intramembrane region, discontinuously helical; it reads CSMNPARSLAPAV. The short motif at 184-186 is the NPA 2 element; it reads NPA. The Extracellular segment spans residues 194-201; that stretch reads VTGKFDDH. A helical membrane pass occupies residues 202–222; it reads WVFWIGPLVGAILGSLLYNYV. Over 223–271 the chain is Cytoplasmic; sequence LFPPAKSLSERLAVLKGLEPDTDWEEREVRRRQSVELHSPQSLPRGTKA. The tract at residues 248–271 is disordered; it reads EREVRRRQSVELHSPQSLPRGTKA. At Ser-256 the chain carries Phosphoserine; by PKA. The segment covering 261–271 has biased composition (polar residues); sequence SPQSLPRGTKA.

Belongs to the MIP/aquaporin (TC 1.A.8) family. Homotetramer. Interacts with micropeptide MIAC; the interaction leads to a reduction of filamentous actin fibers and inhibition of the EREG/EGFR signaling pathway. In terms of processing, ser-256 phosphorylation is necessary and sufficient for expression at the apical membrane. Endocytosis is not phosphorylation-dependent. Post-translationally, N-glycosylated. Expressed in collecting tubules in kidney medulla (at protein level). Detected in kidney.

Its subcellular location is the apical cell membrane. It localises to the basolateral cell membrane. The protein localises to the cell membrane. The protein resides in the cytoplasmic vesicle membrane. It is found in the golgi apparatus. Its subcellular location is the trans-Golgi network membrane. The catalysed reaction is H2O(in) = H2O(out). It catalyses the reaction glycerol(in) = glycerol(out). Forms a water-specific channel that provides the plasma membranes of renal collecting duct with high permeability to water, thereby permitting water to move in the direction of an osmotic gradient. Plays an essential role in renal water homeostasis. Could also be permeable to glycerol. The protein is Aquaporin-2 of Homo sapiens (Human).